Here is a 234-residue protein sequence, read N- to C-terminus: Leucyl/phenylalanyl-tRNA--protein transferase (234 aa).

Belongs to the L/F-transferase family.

It localises to the cytoplasm. The catalysed reaction is N-terminal L-lysyl-[protein] + L-leucyl-tRNA(Leu) = N-terminal L-leucyl-L-lysyl-[protein] + tRNA(Leu) + H(+). It catalyses the reaction N-terminal L-arginyl-[protein] + L-leucyl-tRNA(Leu) = N-terminal L-leucyl-L-arginyl-[protein] + tRNA(Leu) + H(+). The enzyme catalyses L-phenylalanyl-tRNA(Phe) + an N-terminal L-alpha-aminoacyl-[protein] = an N-terminal L-phenylalanyl-L-alpha-aminoacyl-[protein] + tRNA(Phe). Functions in the N-end rule pathway of protein degradation where it conjugates Leu, Phe and, less efficiently, Met from aminoacyl-tRNAs to the N-termini of proteins containing an N-terminal arginine or lysine. This is Leucyl/phenylalanyl-tRNA--protein transferase from Pseudoalteromonas atlantica (strain T6c / ATCC BAA-1087).